We begin with the raw amino-acid sequence, 188 residues long: Capsid protein (188 aa).

This sequence belongs to the tymoviruses capsid protein family.

The protein localises to the virion. Functionally, self-assembles to form a T=3 icosahedral capsid composed of 180 copies of the capsid protein. The capsid encapsulates the single-stranded RNA genome. The protein is Capsid protein of Solanum lycopersicum (Tomato).